A 1006-amino-acid polypeptide reads, in one-letter code: Unconventional myosin-Id (1006 aa).

Position 2 is an N-acetylalanine (alanine 2). The Myosin motor domain maps to 9 to 695 (FGKADFVLMD…TLFTLEELRA (687 aa)). 102–109 (GESGAGKT) contacts ATP. At serine 200 the chain carries Phosphoserine. Tyrosine 536 is modified (phosphotyrosine). The segment at 572–594 (MIALVDNLASKEPYYVRCIKPND) is actin-binding. IQ domains follow at residues 699–719 (IRIVLFLQKVWRGTLARMRYK) and 721–741 (TKAALTIIRYYRRYKVKSYIH). The 194-residue stretch at 812 to 1005 (GQRADLGLQR…RSGFILSVPG (194 aa)) folds into the TH1 domain.

The protein belongs to the TRAFAC class myosin-kinesin ATPase superfamily. Myosin family. In terms of assembly, interacts (via the two IQ motifs) with calmodulin. Binds an additional calmodulin chain via a third, C-terminal region. Interacts with F-actin. In terms of tissue distribution, expressed in many tissues. Highest levels in brain, followed by lung and ovary; expression is lowest in spleen.

The protein resides in the cytoplasm. It is found in the perikaryon. Its subcellular location is the cell projection. It localises to the dendrite. The protein localises to the early endosome. The protein resides in the cell cortex. In terms of biological role, unconventional myosin that functions as actin-based motor protein with ATPase activity. Plays a role in endosomal protein trafficking, and especially in the transfer of cargo proteins from early to recycling endosomes. Required for normal planar cell polarity in ciliated tracheal cells, for normal rotational polarity of cilia, and for coordinated, unidirectional ciliary movement in the trachea. Required for normal, polarized cilia organization in brain ependymal epithelial cells. The chain is Unconventional myosin-Id (MYO1D) from Homo sapiens (Human).